A 180-amino-acid chain; its full sequence is MNIIQQLEAEQAATIEAKRTLPEFSPGDTLRVNVRVTEGNRTRVQAYEGVCIARSGGSINESFTVRKISYGEGVERVFPVYSPLVESVEVVRRGKVRRAKLYYLRDRRGKSARIVENTGTRARKLNDSERAALAEEKARLEAEKVAAAQALAAEKAAAEAAEKAAAAEAEAAKAAEGSAE.

It belongs to the bacterial ribosomal protein bL19 family.

Its function is as follows. This protein is located at the 30S-50S ribosomal subunit interface and may play a role in the structure and function of the aminoacyl-tRNA binding site. The protein is Large ribosomal subunit protein bL19 of Allorhizobium ampelinum (strain ATCC BAA-846 / DSM 112012 / S4) (Agrobacterium vitis (strain S4)).